The following is a 503-amino-acid chain: ATP synthase subunit alpha (503 aa).

170-177 (GDRATGKT) contributes to the ATP binding site.

Belongs to the ATPase alpha/beta chains family. In terms of assembly, F-type ATPases have 2 components, CF(1) - the catalytic core - and CF(0) - the membrane proton channel. CF(1) has five subunits: alpha(3), beta(3), gamma(1), delta(1), epsilon(1). CF(0) has three main subunits: a(1), b(2) and c(9-12). The alpha and beta chains form an alternating ring which encloses part of the gamma chain. CF(1) is attached to CF(0) by a central stalk formed by the gamma and epsilon chains, while a peripheral stalk is formed by the delta and b chains.

Its subcellular location is the cell inner membrane. The catalysed reaction is ATP + H2O + 4 H(+)(in) = ADP + phosphate + 5 H(+)(out). Functionally, produces ATP from ADP in the presence of a proton gradient across the membrane. The alpha chain is a regulatory subunit. This is ATP synthase subunit alpha from Aquifex aeolicus (strain VF5).